A 268-amino-acid chain; its full sequence is MSDDREIQLEAEKHGVFLTTMQRFYNWGRRSSIWPLSFGLACCAIEMMATGLARFDLARFGAEMFRASPRQADLMIVAGTVTKKMAPQVVRLYNQMPEPRYVISMGACATSGGPFRDGYNVLRGIDLLIPVDVYIPGCPPRPEALLHALMTLQKQIDAQRLNQVRWYGKREAKEYPVPTFGKHGLEIDGKLIDPVGGLPLVSPYTSPTHGEMRSGMIEHPELVRHFPIMDETVERESPYKATGIAIEIAHNDLKRPAVEVDHAEDERR.

Residues cysteine 42, cysteine 43, cysteine 108, and cysteine 138 each coordinate [4Fe-4S] cluster.

It belongs to the complex I 20 kDa subunit family. NDH-1 is composed of 14 different subunits. Subunits NuoB, C, D, E, F, and G constitute the peripheral sector of the complex. Requires [4Fe-4S] cluster as cofactor.

It is found in the cell membrane. It carries out the reaction a quinone + NADH + 5 H(+)(in) = a quinol + NAD(+) + 4 H(+)(out). Functionally, NDH-1 shuttles electrons from NADH, via FMN and iron-sulfur (Fe-S) centers, to quinones in the respiratory chain. The immediate electron acceptor for the enzyme in this species is believed to be ubiquinone. Couples the redox reaction to proton translocation (for every two electrons transferred, four hydrogen ions are translocated across the cytoplasmic membrane), and thus conserves the redox energy in a proton gradient. The protein is NADH-quinone oxidoreductase subunit B 1 of Roseiflexus sp. (strain RS-1).